Consider the following 597-residue polypeptide: Sialic acid-binding Ig-like lectin 12 (597 aa).

A signal peptide spans Met1 to Ala20. 2 Ig-like V-type domains span residues Lys21–Thr144 and Ala145–Thr271. At Lys21–Ala483 the chain is on the extracellular side. Cys46 and Cys106 are joined by a disulfide. Residues Asn142, Asn181, Asn232, and Asn292 are each glycosylated (N-linked (GlcNAc...) asparagine). Intrachain disulfides connect Cys168/Cys301, Cys173/Cys233, and Cys295/Cys344. In terms of domain architecture, Ig-like C2-type 1 spans Pro277–Arg360. N-linked (GlcNAc...) asparagine glycans are attached at residues Asn362, Asn369, and Asn387. One can recognise an Ig-like C2-type 2 domain in the interval Pro367 to Ser464. A disulfide bridge links Cys403 with Cys448. Residues Val484 to Val504 traverse the membrane as a helical segment. At Arg505–Lys597 the chain is on the cytoplasmic side. Positions Pro514–Pro558 are disordered. Residues Ile565–Leu570 carry the ITIM motif motif. Phosphotyrosine occurs at positions 567 and 590. An SLAM-like motif motif is present at residues Tyr588–Ile593.

Belongs to the immunoglobulin superfamily. SIGLEC (sialic acid binding Ig-like lectin) family.

The protein resides in the membrane. Functionally, putative adhesion molecule that mediates sialic-acid dependent binding to cells. The sialic acid recognition site may be masked by cis interactions with sialic acids on the same cell surface. The protein is Sialic acid-binding Ig-like lectin 12 (SIGLEC12) of Pan troglodytes (Chimpanzee).